A 345-amino-acid polypeptide reads, in one-letter code: Anthranilate phosphoribosyltransferase (345 aa).

5-phospho-alpha-D-ribose 1-diphosphate-binding positions include glycine 75, glycine 78–aspartate 79, serine 83, asparagine 85–threonine 88, lysine 103–serine 111, and glycine 115. Glycine 75 lines the anthranilate pocket. Serine 87 contributes to the Mg(2+) binding site. Asparagine 106 lines the anthranilate pocket. Arginine 161 serves as a coordination point for anthranilate. Mg(2+) is bound by residues aspartate 219 and glutamate 220.

The protein belongs to the anthranilate phosphoribosyltransferase family. In terms of assembly, homodimer. Mg(2+) is required as a cofactor.

It carries out the reaction N-(5-phospho-beta-D-ribosyl)anthranilate + diphosphate = 5-phospho-alpha-D-ribose 1-diphosphate + anthranilate. The protein operates within amino-acid biosynthesis; L-tryptophan biosynthesis; L-tryptophan from chorismate: step 2/5. Its function is as follows. Catalyzes the transfer of the phosphoribosyl group of 5-phosphorylribose-1-pyrophosphate (PRPP) to anthranilate to yield N-(5'-phosphoribosyl)-anthranilate (PRA). This is Anthranilate phosphoribosyltransferase from Nocardia farcinica (strain IFM 10152).